The chain runs to 215 residues: MGREFLDLFEQWAESYDRSVEGYDEQYRDVFAGYDRILSTVADKAGQVVLEFGVGTGNLTKKLLERGKQVYGIEPSAPMRKKAAEKLSGRAVILDGDFLQFPTPPEPIDTIASTYAFHHLTDAEKDEALAKYSQLLHPGGKIVFADTAFRDKEAFRQAIEEARARGFHDLADDLEREYYTTLDVLASLFSKHGFSASFAQQNAFVWVMEAVKQTT.

The S-adenosyl-L-methionine site is built by Gly-53, Glu-74, and Asp-97.

The protein belongs to the methyltransferase superfamily. YrrT family.

Could be a S-adenosyl-L-methionine-dependent methyltransferase. This is an uncharacterized protein from Geobacillus kaustophilus (strain HTA426).